A 305-amino-acid polypeptide reads, in one-letter code: tRNA pseudouridine synthase B (305 aa).

Catalysis depends on Asp-50, which acts as the Nucleophile.

The protein belongs to the pseudouridine synthase TruB family. Type 1 subfamily.

The enzyme catalyses uridine(55) in tRNA = pseudouridine(55) in tRNA. Its function is as follows. Responsible for synthesis of pseudouridine from uracil-55 in the psi GC loop of transfer RNAs. The chain is tRNA pseudouridine synthase B from Rhodococcus jostii (strain RHA1).